Here is a 407-residue protein sequence, read N- to C-terminus: Cell division protein FtsZ (407 aa).

GTP is bound by residues 18–22, 105–107, Glu136, Arg140, and Asp184; these read GGGVN and GTG. Residues 312-407 form a disordered region; sequence FDGGQPPARR…EELDVPDFLK (96 aa). 2 stretches are compositionally biased toward low complexity: residues 336 to 348 and 368 to 377; these read AAPA…STRP and APATASGESS. The segment covering 381–390 has biased composition (pro residues); the sequence is VSPPHVPPAR. Acidic residues predominate over residues 396–407; it reads QAEELDVPDFLK.

It belongs to the FtsZ family. As to quaternary structure, homodimer. Polymerizes to form a dynamic ring structure in a strictly GTP-dependent manner. Interacts directly with several other division proteins.

The protein localises to the cytoplasm. Functionally, essential cell division protein that forms a contractile ring structure (Z ring) at the future cell division site. The regulation of the ring assembly controls the timing and the location of cell division. One of the functions of the FtsZ ring is to recruit other cell division proteins to the septum to produce a new cell wall between the dividing cells. Binds GTP and shows GTPase activity. The polypeptide is Cell division protein FtsZ (Streptomyces griseus).